Here is a 274-residue protein sequence, read N- to C-terminus: Remorin 4.2 (274 aa).

Basic and acidic residues predominate over residues methionine 1 to histidine 30. 3 disordered regions span residues methionine 1–asparagine 71, threonine 117–arginine 157, and alanine 218–glycine 245. Polar residues-rich tracts occupy residues arginine 61–asparagine 71 and glycine 145–glutamine 156. Residues methionine 204–threonine 239 adopt a coiled-coil conformation. The span at arginine 231–glycine 245 shows a compositional bias: basic and acidic residues.

It belongs to the remorin family. Forms homodimer and heterodimer with REM4.1. Interacts with KIN11. Probably ubiquitinated and degraded by the 26S proteasome pathway. In terms of tissue distribution, predominantly detected in bud, stem, root, flower, silique, and leaves, and enhanced dramatically in senescence leaf.

It localises to the cell membrane. In terms of biological role, collaborates with REM4.1 to positively regulate the BCTV and BSCTV susceptibility. The protein is Remorin 4.2 of Arabidopsis thaliana (Mouse-ear cress).